A 250-amino-acid chain; its full sequence is MSDETSNTTHFGFRTVPEGEKAGMVHGVFTRVASKYDIMNDLMSGGVHRLWKDAMMDWLAPRPGQKLLDVAGGTGDISFRFLKRAPGAEATVCDMTESMLVEGRQRADAAQMADRLDWVVGDAMALPFASNTFDVYTISFGIRNVTRVQDALNEAYRVLKPGGRLMVLEFSQLPNPMMQWAYDRYSFNVIPVMGQIVANDRDSYQYLVESIRKFPDQETFADMIRKAGFGLVKYRNLSLGIAALHSGWKI.

S-adenosyl-L-methionine contacts are provided by residues Thr74, Asp94, 122-123 (DA), and Ser139.

Belongs to the class I-like SAM-binding methyltransferase superfamily. MenG/UbiE family.

The enzyme catalyses a 2-demethylmenaquinol + S-adenosyl-L-methionine = a menaquinol + S-adenosyl-L-homocysteine + H(+). The catalysed reaction is a 2-methoxy-6-(all-trans-polyprenyl)benzene-1,4-diol + S-adenosyl-L-methionine = a 5-methoxy-2-methyl-3-(all-trans-polyprenyl)benzene-1,4-diol + S-adenosyl-L-homocysteine + H(+). It participates in quinol/quinone metabolism; menaquinone biosynthesis; menaquinol from 1,4-dihydroxy-2-naphthoate: step 2/2. It functions in the pathway cofactor biosynthesis; ubiquinone biosynthesis. Methyltransferase required for the conversion of demethylmenaquinol (DMKH2) to menaquinol (MKH2) and the conversion of 2-polyprenyl-6-methoxy-1,4-benzoquinol (DDMQH2) to 2-polyprenyl-3-methyl-6-methoxy-1,4-benzoquinol (DMQH2). The sequence is that of Ubiquinone/menaquinone biosynthesis C-methyltransferase UbiE from Cereibacter sphaeroides (strain ATCC 17029 / ATH 2.4.9) (Rhodobacter sphaeroides).